An 84-amino-acid polypeptide reads, in one-letter code: Cell division topological specificity factor (84 aa).

This sequence belongs to the MinE family.

Its function is as follows. Prevents the cell division inhibition by proteins MinC and MinD at internal division sites while permitting inhibition at polar sites. This ensures cell division at the proper site by restricting the formation of a division septum at the midpoint of the long axis of the cell. This is Cell division topological specificity factor from Pseudomonas fluorescens (strain SBW25).